Here is a 395-residue protein sequence, read N- to C-terminus: Beta-1,4-galactosyltransferase 3 (395 aa).

The Cytoplasmic segment spans residues 1-10 (MLRRLLERPC). A helical; Signal-anchor for type II membrane protein transmembrane segment spans residues 11–31 (TLALLVGSQLAVMMYLSLGGF). Topologically, residues 32-395 (RSLSALFGRD…ANHTAPHGSH (364 aa)) are lumenal. N-linked (GlcNAc...) asparagine glycosylation occurs at N57. C79 and C121 form a disulfide bridge. UDP-alpha-D-galactose-binding positions include 132 to 136 (PHRAR), 171 to 173 (FNR), 198 to 199 (VD), Y228, and W260. C192 and C211 form a disulfide bridge. Position 199 (D199) interacts with Mn(2+). Position 262–265 (262–265 (GEDD)) interacts with N-acetyl-D-glucosamine. H293 contacts Mn(2+). 293–295 (HRG) lines the UDP-alpha-D-galactose pocket. R305 serves as a coordination point for N-acetyl-D-glucosamine. N-linked (GlcNAc...) asparagine glycans are attached at residues N339 and N387. Residues 341–395 (TADIGTDPRGPRAPSGPRYPPGSSQAFRQEMLQRRPPARPGPLPTANHTAPHGSH) form a disordered region.

It belongs to the glycosyltransferase 7 family. Requires Mn(2+) as cofactor.

Its subcellular location is the golgi apparatus. The protein resides in the golgi stack membrane. It carries out the reaction an N-acetyl-beta-D-glucosaminyl derivative + UDP-alpha-D-galactose = a beta-D-galactosyl-(1-&gt;4)-N-acetyl-beta-D-glucosaminyl derivative + UDP + H(+). The enzyme catalyses N-acetyl-D-glucosamine + UDP-alpha-D-galactose = beta-D-galactosyl-(1-&gt;4)-N-acetyl-D-glucosamine + UDP + H(+). The catalysed reaction is a beta-D-GlcNAc-(1-&gt;3)-beta-D-Gal-(1-&gt;4)-beta-D-Glc-(1&lt;-&gt;1)-Cer(d18:1(4E)) + UDP-alpha-D-galactose = a neolactoside nLc4Cer(d18:1(4E)) + UDP + H(+). It catalyses the reaction a beta-D-glucosylceramide + UDP-alpha-D-galactose = a beta-D-galactosyl-(1-&gt;4)-beta-D-glucosyl-(1&lt;-&gt;1)-ceramide + UDP + H(+). It carries out the reaction a neolactoside IV(3)-beta-GlcNAc-nLc4Cer + UDP-alpha-D-galactose = a neolactoside nLc6Cer + UDP + H(+). Its pathway is protein modification; protein glycosylation. Functionally, responsible for the synthesis of complex-type N-linked oligosaccharides in many glycoproteins as well as the carbohydrate moieties of glycolipids. The protein is Beta-1,4-galactosyltransferase 3 (B4GALT3) of Cricetulus griseus (Chinese hamster).